The chain runs to 263 residues: Ribosomal RNA small subunit methyltransferase A (263 aa).

S-adenosyl-L-methionine-binding residues include asparagine 13, threonine 15, glycine 40, glutamate 61, aspartate 85, and asparagine 105.

Belongs to the class I-like SAM-binding methyltransferase superfamily. rRNA adenine N(6)-methyltransferase family. RsmA subfamily.

It is found in the cytoplasm. The enzyme catalyses adenosine(1518)/adenosine(1519) in 16S rRNA + 4 S-adenosyl-L-methionine = N(6)-dimethyladenosine(1518)/N(6)-dimethyladenosine(1519) in 16S rRNA + 4 S-adenosyl-L-homocysteine + 4 H(+). Its function is as follows. Specifically dimethylates two adjacent adenosines (A1518 and A1519) in the loop of a conserved hairpin near the 3'-end of 16S rRNA in the 30S particle. May play a critical role in biogenesis of 30S subunits. In Mycoplasma pneumoniae (strain ATCC 29342 / M129 / Subtype 1) (Mycoplasmoides pneumoniae), this protein is Ribosomal RNA small subunit methyltransferase A.